The sequence spans 306 residues: Recombination-associated protein RdgC (306 aa).

This sequence belongs to the RdgC family.

The protein localises to the cytoplasm. Its subcellular location is the nucleoid. Its function is as follows. May be involved in recombination. This is Recombination-associated protein RdgC from Pseudomonas paraeruginosa (strain DSM 24068 / PA7) (Pseudomonas aeruginosa (strain PA7)).